The following is a 207-amino-acid chain: Dephospho-CoA kinase (207 aa).

Residues 10 to 207 enclose the DPCK domain; sequence ILGLTGGIGS…FYLTLRGGQP (198 aa). An ATP-binding site is contributed by 18 to 23; the sequence is GSGKSA.

This sequence belongs to the CoaE family.

Its subcellular location is the cytoplasm. It catalyses the reaction 3'-dephospho-CoA + ATP = ADP + CoA + H(+). The protein operates within cofactor biosynthesis; coenzyme A biosynthesis; CoA from (R)-pantothenate: step 5/5. Catalyzes the phosphorylation of the 3'-hydroxyl group of dephosphocoenzyme A to form coenzyme A. The chain is Dephospho-CoA kinase from Pseudomonas putida (Arthrobacter siderocapsulatus).